The primary structure comprises 544 residues: Lysophosphatidylcholine acyltransferase 2 (544 aa).

The Cytoplasmic segment spans residues 1–57 (MSRCAQAAEVAATVPGAGVGNVGLRPPMVPRQASFFPPPVPNPFVQQTQIGSARRVQ). The helical; Signal-anchor for type II membrane protein transmembrane segment at 58–78 (IVLLGIILLPIRVLLVALILL) threads the bilayer. The Lumenal portion of the chain corresponds to 79–544 (LAWPFAAIST…EESTSDKKDD (466 aa)). Residues 146 to 151 (HSTFFD) carry the HXXXXD motif motif. An EGTC motif motif is present at residues 220–223 (EGTC). 2 consecutive EF-hand domains span residues 391-426 (PVSD…LCNP) and 428-463 (NTEE…SLGV). Positions 404, 406, 408, 410, 415, 441, 443, 445, 447, and 452 each coordinate Ca(2+). The segment covering 518 to 529 (VQTTPSTASNKV) has biased composition (polar residues). Residues 518–544 (VQTTPSTASNKVSPEKHEESTSDKKDD) form a disordered region. The span at 530-544 (SPEKHEESTSDKKDD) shows a compositional bias: basic and acidic residues.

This sequence belongs to the 1-acyl-sn-glycerol-3-phosphate acyltransferase family.

It is found in the endoplasmic reticulum membrane. The protein localises to the golgi apparatus membrane. It localises to the cell membrane. Its subcellular location is the lipid droplet. It carries out the reaction a 1-acyl-sn-glycero-3-phosphocholine + an acyl-CoA = a 1,2-diacyl-sn-glycero-3-phosphocholine + CoA. The enzyme catalyses a 1-O-alkyl-sn-glycero-3-phosphocholine + acetyl-CoA = a 1-O-alkyl-2-acetyl-sn-glycero-3-phosphocholine + CoA. The catalysed reaction is a 1-acyl-sn-glycero-3-phosphate + an acyl-CoA = a 1,2-diacyl-sn-glycero-3-phosphate + CoA. It catalyses the reaction a 1-O-(1Z-alkenyl)-sn-glycero-3-phosphocholine + an acyl-CoA = a 1-O-(1Z-alkenyl)-2-acyl-sn-glycero-3-phosphocholine + CoA. It carries out the reaction 1-hexadecanoyl-sn-glycero-3-phosphate + (9Z)-octadecenoyl-CoA = 1-hexadecanoyl-2-(9Z-octadecenoyl)-sn-glycero-3-phosphate + CoA. The enzyme catalyses 1-(9Z-octadecenoyl)-sn-glycero-3-phosphate + (9Z)-octadecenoyl-CoA = 1,2-di-(9Z-octadecenoyl)-sn-glycero-3-phosphate + CoA. The catalysed reaction is 1-(9Z-octadecenoyl)-sn-glycero-3-phosphate + hexadecanoyl-CoA = 1-(9Z)-octadecenoyl-2-hexadecanoyl-sn-glycero-3-phosphate + CoA. It catalyses the reaction 1-heptadecanoyl-sn-glycero-3-phosphate + (9Z)-octadecenoyl-CoA = 1-heptadecanoyl-2-(9Z)-octadecenoyl-sn-glycero-3-phosphate + CoA. It carries out the reaction 1-octadecanoyl-sn-glycero-3-phosphate + (9Z)-octadecenoyl-CoA = 1-octadecanoyl-2-(9Z-octadecenoyl)-sn-glycero-3-phosphate + CoA. The enzyme catalyses heptadecanoyl-CoA + 1-(9Z-octadecenoyl)-sn-glycero-3-phosphate = 1-(9Z)-octadecenoyl-2-heptadecanoyl-sn-glycero-3-phosphate + CoA. The catalysed reaction is 1-(9Z-octadecenoyl)-sn-glycero-3-phosphate + (9Z,12Z)-octadecadienoyl-CoA = 1-(9Z)-octadecenoyl-2-(9Z,12Z)-octadecadienoyl-sn-glycero-3-phosphate + CoA. It catalyses the reaction 1-(9Z-octadecenoyl)-sn-glycero-3-phosphate + tetradecanoyl-CoA = 1-(9Z)-octadecenoyl-2-tetradecanoyl-sn-glycero-3-phosphate + CoA. It carries out the reaction pentadecanoyl-CoA + 1-(9Z-octadecenoyl)-sn-glycero-3-phosphate = 1-(9Z)-octadecenoyl-2-pentadecanoyl-sn-glycero-3-phosphate + CoA. The enzyme catalyses nonadecanoyl-CoA + 1-(9Z-octadecenoyl)-sn-glycero-3-phosphate = 1-(9Z)-octadecenoyl-2-nonadecanoyl-sn-glycero-3-phosphate + CoA. The catalysed reaction is 1-hexadecanoyl-sn-glycero-3-phosphocholine + (9Z)-octadecenoyl-CoA = 1-hexadecanoyl-2-(9Z-octadecenoyl)-sn-glycero-3-phosphocholine + CoA. It catalyses the reaction 1-O-hexadecyl-sn-glycero-3-phosphocholine + acetyl-CoA = 1-O-hexadecyl-2-acetyl-sn-glycero-3-phosphocholine + CoA. It carries out the reaction 1-O-octadecyl-sn-glycero-3-phosphocholine + acetyl-CoA = 1-O-octadecyl-2-acetyl-sn-glycero-3-phosphocholine + CoA. The enzyme catalyses 1-hexadecanoyl-sn-glycero-3-phosphocholine + acetyl-CoA = 1-hexadecanoyl-2-acetyl-sn-glycero-3-phosphocholine + CoA. The catalysed reaction is 1-octadecanoyl-sn-glycero-3-phosphocholine + acetyl-CoA = 1-octadecanoyl-2-acetyl-sn-glycero-3-phosphocholine + CoA. It catalyses the reaction a 1-O-(1Z-alkenyl)-sn-glycero-3-phosphocholine + acetyl-CoA = 1-O-(1Z)-alkenyl-2-acetyl-sn-glycero-3-phosphocholine + CoA. It carries out the reaction 1-O-octadecyl-sn-glycero-3-phosphocholine + (5Z,8Z,11Z,14Z)-eicosatetraenoyl-CoA = 1-O-octadecyl-2-(5Z,8Z,11Z,14Z)-eicosatetraenoyl-sn-glycero-3-phosphocholine + CoA. It participates in lipid metabolism; phospholipid metabolism. Exhibits both acyltransferase and acetyltransferase activities. Catalyzes the conversion of lysophosphatidylcholine (1-acyl-sn-glycero-3-phosphocholine or LPC) into phosphatidylcholine (1,2-diacyl-sn-glycero-3-phosphocholine or PC). Catalyzes the conversion 1-acyl-sn-glycerol-3-phosphate (lysophosphatidic acid or LPA) into 1,2-diacyl-sn-glycerol-3-phosphate (phosphatidic acid or PA) by incorporating an acyl moiety at the sn-2 position of the glycerol backbone. Involved in platelet-activating factor (PAF) biosynthesis by catalyzing the conversion of the PAF precursor, 1-O-alkyl-sn-glycero-3-phosphocholine (lyso-PAF) into 1-O-alkyl-2-acetyl-sn-glycero-3-phosphocholine (PAF). Also converts lyso-PAF to 1-O-alkyl-2-acyl-sn-glycero-3-phosphocholine (PC), a major component of cell membranes and a PAF precursor. Under resting conditions, acyltransferase activity is preferred. Upon acute inflammatory stimulus, acetyltransferase activity is enhanced and PAF synthesis increases. Involved in the regulation of lipid droplet number and size. This chain is Lysophosphatidylcholine acyltransferase 2 (LPCAT2), found in Homo sapiens (Human).